Here is a 319-residue protein sequence, read N- to C-terminus: Sliding-clamp-loader large subunit (319 aa).

ATP contacts are provided by residues 12 to 15, isoleucine 24, 53 to 58, and arginine 205; these read EQKY and GTGKTT.

This sequence belongs to the Tevenvirinae sliding-clamp-loader large subunit family. In terms of assembly, the sliding-clamp-loader consists of 4 large subunits and 1 small subunit. Interacts with the sliding clamp; this interaction allows the sliding-clamp-loader to open the sliding clamp. Part of the replicase complex that includes the DNA polymerase, the polymerase clamp, the clamp loader complex, the single-stranded DNA binding protein, the primase, the helicase and the helicase assembly factor.

Functionally, forms the sliding-clamp-loader together with the small subunit. Functions as an ATPase enzyme. The clamp loader holds the clamp in an open conformation and places it onto the DNA. 4 ATP molecules must bind to the sliding-clamp-loader before the latter can open the sliding clamp. ATP hydrolysis triggers the detachment of the sliding clamp from the sliding-clamp-loader, freeing the sliding clamp to track along DNA. The sequence is that of Sliding-clamp-loader large subunit (44) from Enterobacteria phage T4 (Bacteriophage T4).